A 501-amino-acid chain; its full sequence is Aluminum-activated malate transporter 2 (501 aa).

The next 6 membrane-spanning stretches (helical) occupy residues 22-42 (VVHA…YYYQ), 52-72 (AMWA…ATLG), 78-98 (AVAT…ASLS), 101-121 (TVEP…STFV), 130-150 (RYDY…VSGF), and 166-186 (VIMG…VWAG). The disordered stretch occupies residues 398-425 (FKNKKKPSKSNSGSIGQAMPNKSHDDDD).

It belongs to the aromatic acid exporter (TC 2.A.85) family.

It is found in the membrane. Its function is as follows. Malate transporter. In Arabidopsis thaliana (Mouse-ear cress), this protein is Aluminum-activated malate transporter 2 (ALMT2).